The following is a 50-amino-acid chain: ATP synthase protein 8 (50 aa).

The helical transmembrane segment at 13–32 (ITFTFIILAITVYILSKYIL) threads the bilayer.

It belongs to the ATPase protein 8 family. F-type ATPases have 2 components, CF(1) - the catalytic core - and CF(0) - the membrane proton channel.

It is found in the mitochondrion membrane. Mitochondrial membrane ATP synthase (F(1)F(0) ATP synthase or Complex V) produces ATP from ADP in the presence of a proton gradient across the membrane which is generated by electron transport complexes of the respiratory chain. F-type ATPases consist of two structural domains, F(1) - containing the extramembraneous catalytic core and F(0) - containing the membrane proton channel, linked together by a central stalk and a peripheral stalk. During catalysis, ATP synthesis in the catalytic domain of F(1) is coupled via a rotary mechanism of the central stalk subunits to proton translocation. Part of the complex F(0) domain. Minor subunit located with subunit a in the membrane. The polypeptide is ATP synthase protein 8 (ATP8) (Podospora anserina (strain S / ATCC MYA-4624 / DSM 980 / FGSC 10383) (Pleurage anserina)).